Here is a 230-residue protein sequence, read N- to C-terminus: Small ribosomal subunit protein uS3 (230 aa).

Residues 39 to 107 (VREYLFKRLK…PVHINIEEVR (69 aa)) form the KH type-2 domain.

The protein belongs to the universal ribosomal protein uS3 family. In terms of assembly, part of the 30S ribosomal subunit. Forms a tight complex with proteins S10 and S14.

Functionally, binds the lower part of the 30S subunit head. Binds mRNA in the 70S ribosome, positioning it for translation. This is Small ribosomal subunit protein uS3 from Alcanivorax borkumensis (strain ATCC 700651 / DSM 11573 / NCIMB 13689 / SK2).